The chain runs to 150 residues: Arginine repressor (150 aa).

This sequence belongs to the ArgR family.

The protein localises to the cytoplasm. It participates in amino-acid biosynthesis; L-arginine biosynthesis [regulation]. Functionally, regulates arginine biosynthesis genes. This Desulforudis audaxviator (strain MP104C) protein is Arginine repressor.